The following is a 267-amino-acid chain: Phosphate import ATP-binding protein PstB (267 aa).

The ABC transporter domain occupies 21–262 (IAIRNLEFYY…PSKQQTEDYI (242 aa)). 53–60 (GPSGCGKS) lines the ATP pocket.

Belongs to the ABC transporter superfamily. Phosphate importer (TC 3.A.1.7) family. In terms of assembly, the complex is composed of two ATP-binding proteins (PstB), two transmembrane proteins (PstC and PstA) and a solute-binding protein (PstS).

Its subcellular location is the cell inner membrane. It carries out the reaction phosphate(out) + ATP + H2O = ADP + 2 phosphate(in) + H(+). Its function is as follows. Part of the ABC transporter complex PstSACB involved in phosphate import. Responsible for energy coupling to the transport system. The chain is Phosphate import ATP-binding protein PstB from Xylella fastidiosa (strain 9a5c).